Here is a 292-residue protein sequence, read N- to C-terminus: Bifunctional protein FolD (292 aa).

NADP(+) is bound by residues 161–163 and Ile231; that span reads GRS.

It belongs to the tetrahydrofolate dehydrogenase/cyclohydrolase family. Homodimer.

The enzyme catalyses (6R)-5,10-methylene-5,6,7,8-tetrahydrofolate + NADP(+) = (6R)-5,10-methenyltetrahydrofolate + NADPH. The catalysed reaction is (6R)-5,10-methenyltetrahydrofolate + H2O = (6R)-10-formyltetrahydrofolate + H(+). The protein operates within one-carbon metabolism; tetrahydrofolate interconversion. Functionally, catalyzes the oxidation of 5,10-methylenetetrahydrofolate to 5,10-methenyltetrahydrofolate and then the hydrolysis of 5,10-methenyltetrahydrofolate to 10-formyltetrahydrofolate. In Protochlamydia amoebophila (strain UWE25), this protein is Bifunctional protein FolD.